A 561-amino-acid polypeptide reads, in one-letter code: Nucleoprotein (561 aa).

A binding site for the cap structure m7GTP region spans residues 53 to 237 (MRKDKRSEAD…ITQEPAQINI (185 aa)). Mn(2+) contacts are provided by Asp-380 and Glu-382. Zn(2+) contacts are provided by Glu-390, Cys-497, His-500, and Cys-521. Asp-525 is a binding site for Mn(2+).

The protein belongs to the arenaviridae nucleocapsid protein family. Homomultimerizes to form the nucleocapsid. Binds to viral genomic RNA. Interacts with glycoprotein G2. Interacts with protein Z; this interaction probably directs the encapsidated genome to budding sites. Interacts with protein L; this interaction does not interfere with Z-L interaction. Interacts with host IKBKE (via Protein kinase domain); the interaction inhibits IKBKE kinase activity.

Its subcellular location is the virion. It is found in the host cytoplasm. Functionally, encapsidates the genome, protecting it from nucleases. The encapsidated genomic RNA is termed the nucleocapsid (NC). Serves as template for viral transcription and replication. The increased presence of protein N in host cell does not seem to trigger the switch from transcription to replication as observed in other negative strain RNA viruses. Through the interaction with host IKBKE, strongly inhibits the phosphorylation and nuclear translocation of host IRF3, a protein involved in interferon activation pathway, leading to the inhibition of interferon-beta and IRF3-dependent promoters activation. Also encodes a functional 3'-5' exoribonuclease that degrades preferentially dsRNA substrates and thereby participates in the suppression of interferon induction. The protein is Nucleoprotein of Allpahuayo mammarenavirus (isolate Rat/Peru/CLHP-2472/1997) (ALLV).